We begin with the raw amino-acid sequence, 151 residues long: UPF0208 membrane protein ECA3038 (151 aa).

The next 2 membrane-spanning stretches (helical) occupy residues 46-66 and 69-89; these read FGIRIMPPLAVFTLTWQIALG and LGPAIATALFACSLPLQGLWW.

It belongs to the UPF0208 family.

The protein localises to the cell inner membrane. The protein is UPF0208 membrane protein ECA3038 of Pectobacterium atrosepticum (strain SCRI 1043 / ATCC BAA-672) (Erwinia carotovora subsp. atroseptica).